The sequence spans 650 residues: DNA mismatch repair protein MutL (650 aa).

Residues 374-420 (SSLPDTQRSQRQPEKAASGQRSSVDAGLSQGSSAHRASQTGLGQSGN) are disordered. Over residues 392–420 (GQRSSVDAGLSQGSSAHRASQTGLGQSGN) the composition is skewed to polar residues.

This sequence belongs to the DNA mismatch repair MutL/HexB family.

In terms of biological role, this protein is involved in the repair of mismatches in DNA. It is required for dam-dependent methyl-directed DNA mismatch repair. May act as a 'molecular matchmaker', a protein that promotes the formation of a stable complex between two or more DNA-binding proteins in an ATP-dependent manner without itself being part of a final effector complex. The protein is DNA mismatch repair protein MutL of Shewanella amazonensis (strain ATCC BAA-1098 / SB2B).